The chain runs to 220 residues: uncharacterized protein (220 aa).

It belongs to the DadA oxidoreductase family. It depends on FAD as a cofactor.

This is an uncharacterized protein from Halorhodospira halophila (Ectothiorhodospira halophila).